Reading from the N-terminus, the 350-residue chain is Uroporphyrinogen decarboxylase (350 aa).

Residues 27-31 (RQAGR), Phe-46, Asp-76, Tyr-152, Ser-207, and His-321 each bind substrate.

It belongs to the uroporphyrinogen decarboxylase family. As to quaternary structure, homodimer.

It localises to the cytoplasm. It catalyses the reaction uroporphyrinogen III + 4 H(+) = coproporphyrinogen III + 4 CO2. Its pathway is porphyrin-containing compound metabolism; protoporphyrin-IX biosynthesis; coproporphyrinogen-III from 5-aminolevulinate: step 4/4. In terms of biological role, catalyzes the decarboxylation of four acetate groups of uroporphyrinogen-III to yield coproporphyrinogen-III. The protein is Uroporphyrinogen decarboxylase of Listeria welshimeri serovar 6b (strain ATCC 35897 / DSM 20650 / CCUG 15529 / CIP 8149 / NCTC 11857 / SLCC 5334 / V8).